Here is a 138-residue protein sequence, read N- to C-terminus: Phospholipase A2 crotoxin basic chain CBa2 (138 aa).

The first 16 residues, 1-16, serve as a signal peptide directing secretion; that stretch reads MRALWIVAVLLVGVEG. Cystine bridges form between Cys42/Cys131, Cys44/Cys60, Cys59/Cys111, Cys65/Cys138, Cys66/Cys104, Cys73/Cys97, and Cys91/Cys102. 3 residues coordinate Ca(2+): Tyr43, Gly45, and Gly47. His63 is a catalytic residue. Asp64 serves as a coordination point for Ca(2+). Asp105 is an active-site residue.

It belongs to the phospholipase A2 family. Group II subfamily. D49 sub-subfamily. Heterodimer of one of the acidic (CA1, CA2, CA3 or CA4) and one of the basic (CBa1, CBa2, CBb, CBc or CBd) subunits; non-covalently linked. The acidic subunit is non-toxic, without enzymatic activity and comprises 3 peptides that are cross-linked by 5 disulfide bridges. The basic subunit is toxic, has phospholipase A2 activity and is composed of a single chain. Multiple variants of each subunit give different crotoxin complexes that can be subdivided into 2 classes: (1) those of high toxicity, low PLA2 activity (CBb, CBc and CBd linked with high affinity to any CA) and high stability (K(d)=4.5 nM) and (2) those of moderate toxicity, high PLA2 activity (CBa2 linked with low affinity to any CA) and low stability (K(d)=25 nM). Interacts with human NBD1 domain of CFTR. Requires Ca(2+) as cofactor. As to expression, expressed by the venom gland.

Its subcellular location is the secreted. It carries out the reaction a 1,2-diacyl-sn-glycero-3-phosphocholine + H2O = a 1-acyl-sn-glycero-3-phosphocholine + a fatty acid + H(+). Its function is as follows. Heterodimer CA-CB: Crotoxin is a potent presynaptic neurotoxin that possesses phospholipase A2 (PLA2) activity and exerts a lethal action by blocking neuromuscular transmission. It consists of a non-covalent association of a basic and weakly toxic PLA2 subunit (CBa2, CBb, CBc, or CBd), with a small acidic, non-enzymatic and non-toxic subunit (CA1, CA2, CA3 or CA4). The complex acts by binding to a specific 48-kDa protein (R48) receptor located on presynaptic membranes, forming a transient ternary complex CA-CB-R48, followed by dissociation of the CA-CB complex and release of the CA subunit. At equilibrium, only the CB subunits remain associated with the specific crotoxin receptor. In addition to neurotoxicity, crotoxin has been found to exert myotoxicity, nephrotoxicity, and cardiovascular toxicity. Moreover, anti-inflammatory, immunomodulatory, anti-tumor and analgesic effects of crotoxin have also been reported. In terms of biological role, monomer CBa2: The basic subunit of crotoxin is a snake venom phospholipase A2 (PLA2) that exhibits weak neurotoxicity (10-fold less than the heterodimer) and strong anticoagulant effects by binding to factor Xa (F10) and inhibiting the prothrombinase activity (IC(50) is 41 nM). In addition, it shows the same effects described for the heterodimer and binds the nucleotide-binding domain (NBD1) of CFTR chloride channels and increases the channel current. PLA2 catalyzes the calcium-dependent hydrolysis of the 2-acyl groups in 3-sn-phosphoglycerides. This is Phospholipase A2 crotoxin basic chain CBa2 from Crotalus durissus terrificus (South American rattlesnake).